A 122-amino-acid polypeptide reads, in one-letter code: UPF0102 protein MUL_2060 (122 aa).

This sequence belongs to the UPF0102 family.

The chain is UPF0102 protein MUL_2060 from Mycobacterium ulcerans (strain Agy99).